We begin with the raw amino-acid sequence, 237 residues long: Ribosomal RNA small subunit methyltransferase G (237 aa).

Residues G78, F83, 129–130 (AE), and R148 contribute to the S-adenosyl-L-methionine site.

Belongs to the methyltransferase superfamily. RNA methyltransferase RsmG family.

The protein localises to the cytoplasm. Functionally, specifically methylates the N7 position of a guanine in 16S rRNA. The sequence is that of Ribosomal RNA small subunit methyltransferase G from Streptococcus pyogenes serotype M6 (strain ATCC BAA-946 / MGAS10394).